We begin with the raw amino-acid sequence, 2581 residues long: Chromodomain-helicase-DNA-binding protein 8 (2581 aa).

Disordered regions lie at residues 22–114 (DDSF…QTST), 253–283 (VKGS…TQGE), 349–392 (QKIQ…SPGQ), 429–582 (ALSS…QVKR), and 596–615 (DEEE…PILP). 2 stretches are compositionally biased toward polar residues: residues 42–51 (SLDSLDQMNQ) and 94–114 (DYTT…QTST). Low complexity predominate over residues 255–267 (GSAPAGNPGATGP). Residues 355–370 (PQPPSSQPQPQQPPST) show a composition bias toward pro residues. Position 432 is a phosphoserine (S432). 2 stretches are compositionally biased toward basic and acidic residues: residues 445–462 (GMEE…EKAN) and 493–516 (RPEE…EEKP). A phosphoserine mark is found at S553 and S562. The segment covering 572-582 (QKRRSNRQVKR) has biased composition (basic residues). Residue K609 forms a Glycyl lysine isopeptide (Lys-Gly) (interchain with G-Cter in SUMO) linkage. 2 Chromo domains span residues 642-709 (AIVD…AQMR) and 724-790 (VEVD…RVNR). The Helicase ATP-binding domain occupies 823-997 (LFNWYNRQNC…FSLLHFLEPS (175 aa)). 836–843 (DEMGLGKT) is an ATP binding site. A DEAH box motif is present at residues 948–951 (DEAH). Residues 1137-1288 (LIDKLLPKLK…KAVLQSMSGR (152 aa)) enclose the Helicase C-terminal domain. Phosphoserine is present on residues S1420 and S1424. Positions 1692–1712 (EDPEYKPLQGPPKDQDDEGDP) are disordered. Residues 1789–2302 (IARREKQQRW…LVELEVECME (514 aa)) are interaction with FAM124B. S1976 and S1978 each carry phosphoserine. Residues 1991 to 2116 (SRTASPLPLR…TDQSRSKLYD (126 aa)) form a disordered region. Phosphothreonine is present on T1993. Phosphoserine is present on residues S1995 and S2008. A compositionally biased stretch (polar residues) spans 2011 to 2021 (ETATQVPSLES). K2025 participates in a covalent cross-link: Glycyl lysine isopeptide (Lys-Gly) (interchain with G-Cter in SUMO2). Phosphoserine is present on S2046. T2051 carries the post-translational modification Phosphothreonine. Residues 2064–2073 (EDEDDSDSEL) show a composition bias toward acidic residues. Phosphoserine occurs at positions 2069 and 2071. The span at 2076 to 2095 (SKLSPSSSSSSSSSSSSSST) shows a compositional bias: low complexity. The segment covering 2103–2116 (EEKLTDQSRSKLYD) has biased composition (basic and acidic residues). Residues S2182, S2200, and S2202 each carry the phosphoserine modification. A disordered region spans residues 2189–2229 (GILGPGNHLLDSPSLTPGEYGDSPVPTPRSSSAASMAEEEA). A Phosphothreonine modification is found at T2204. S2211 carries the phosphoserine modification. The residue at position 2215 (T2215) is a Phosphothreonine. Positions 2218–2229 (SSSAASMAEEEA) are enriched in low complexity. Phosphoserine is present on S2223. K2256 participates in a covalent cross-link: Glycyl lysine isopeptide (Lys-Gly) (interchain with G-Cter in SUMO2). The tract at residues 2481-2581 (PSSPHVDSST…NSDSSEDADD (101 aa)) is disordered. Over residues 2492–2510 (LHHHHHHPHPHHHHHHHPG) the composition is skewed to basic residues. The residue at position 2519 (S2519) is a Phosphoserine. A compositionally biased stretch (polar residues) spans 2519–2528 (SPVTTASGTT). The span at 2536–2550 (PEEDDDEDEEDDDDL) shows a compositional bias: acidic residues.

The protein belongs to the SNF2/RAD54 helicase family. CHD8 subfamily. As to quaternary structure, interacts with p53/TP53, histone H1, CTNNB1, CTCF and PIAS3. Component of some MLL1/MLL complex, at least composed of the core components KMT2A/MLL1, ASH2L, HCFC1/HCF1, WDR5 and RBBP5, as well as the facultative components BACC1, CHD8, E2F6, HSP70, INO80C, KANSL1, LAS1L, MAX, MCRS1, MGA, KAT8/MOF, PELP1, PHF20, PRP31, RING2, RUVB1/TIP49A, RUVB2/TIP49B, SENP3, TAF1, TAF4, TAF6, TAF7, TAF9 and TEX10. Interacts with CHD7. Interacts with FAM124B. Interacts with TLK2. Interacts with HNRNPL in an RNA-dependent manner. In terms of processing, sumoylated.

Its subcellular location is the nucleus. It catalyses the reaction ATP + H2O = ADP + phosphate + H(+). ATP-dependent chromatin-remodeling factor, it slides nucleosomes along DNA; nucleosome sliding requires ATP. Acts as a transcription repressor by remodeling chromatin structure and recruiting histone H1 to target genes. Suppresses p53/TP53-mediated apoptosis by recruiting histone H1 and preventing p53/TP53 transactivation activity. Acts as a negative regulator of Wnt signaling pathway by regulating beta-catenin (CTNNB1) activity. Negatively regulates CTNNB1-targeted gene expression by being recruited specifically to the promoter regions of several CTNNB1 responsive genes. Involved in both enhancer blocking and epigenetic remodeling at chromatin boundary via its interaction with CTCF. Acts as a suppressor of STAT3 activity by suppressing the LIF-induced STAT3 transcriptional activity. Also acts as a transcription activator via its interaction with ZNF143 by participating in efficient U6 RNA polymerase III transcription. Regulates alternative splicing of a core group of genes involved in neuronal differentiation, cell cycle and DNA repair. Enables H3K36me3-coupled transcription elongation and co-transcriptional RNA processing likely via interaction with HNRNPL. The sequence is that of Chromodomain-helicase-DNA-binding protein 8 from Homo sapiens (Human).